The primary structure comprises 367 residues: Chorismate synthase (367 aa).

Arg-48 serves as a coordination point for NADP(+). FMN contacts are provided by residues 125-127, Gly-284, 299-303, and Arg-325; these read RSS and KPTPS.

Belongs to the chorismate synthase family. As to quaternary structure, homotetramer. Requires FMNH2 as cofactor.

It carries out the reaction 5-O-(1-carboxyvinyl)-3-phosphoshikimate = chorismate + phosphate. It functions in the pathway metabolic intermediate biosynthesis; chorismate biosynthesis; chorismate from D-erythrose 4-phosphate and phosphoenolpyruvate: step 7/7. Its function is as follows. Catalyzes the anti-1,4-elimination of the C-3 phosphate and the C-6 proR hydrogen from 5-enolpyruvylshikimate-3-phosphate (EPSP) to yield chorismate, which is the branch point compound that serves as the starting substrate for the three terminal pathways of aromatic amino acid biosynthesis. This reaction introduces a second double bond into the aromatic ring system. This chain is Chorismate synthase, found in Lachnoclostridium phytofermentans (strain ATCC 700394 / DSM 18823 / ISDg) (Clostridium phytofermentans).